The following is a 364-amino-acid chain: tRNA 2-selenouridine synthase (364 aa).

Residues 14–137 (LIADTPIIDV…LRQTAIQATI (124 aa)) enclose the Rhodanese domain. The active-site S-selanylcysteine intermediate is Cys97.

Belongs to the SelU family. Monomer.

It catalyses the reaction 5-methylaminomethyl-2-thiouridine(34) in tRNA + selenophosphate + (2E)-geranyl diphosphate + H2O + H(+) = 5-methylaminomethyl-2-selenouridine(34) in tRNA + (2E)-thiogeraniol + phosphate + diphosphate. The catalysed reaction is 5-methylaminomethyl-2-thiouridine(34) in tRNA + (2E)-geranyl diphosphate = 5-methylaminomethyl-S-(2E)-geranyl-thiouridine(34) in tRNA + diphosphate. The enzyme catalyses 5-methylaminomethyl-S-(2E)-geranyl-thiouridine(34) in tRNA + selenophosphate + H(+) = 5-methylaminomethyl-2-(Se-phospho)selenouridine(34) in tRNA + (2E)-thiogeraniol. It carries out the reaction 5-methylaminomethyl-2-(Se-phospho)selenouridine(34) in tRNA + H2O = 5-methylaminomethyl-2-selenouridine(34) in tRNA + phosphate. Involved in the post-transcriptional modification of the uridine at the wobble position (U34) of tRNA(Lys), tRNA(Glu) and tRNA(Gln). Catalyzes the conversion of 2-thiouridine (S2U-RNA) to 2-selenouridine (Se2U-RNA). Acts in a two-step process involving geranylation of 2-thiouridine (S2U) to S-geranyl-2-thiouridine (geS2U) and subsequent selenation of the latter derivative to 2-selenouridine (Se2U) in the tRNA chain. The sequence is that of tRNA 2-selenouridine synthase from Escherichia fergusonii (strain ATCC 35469 / DSM 13698 / CCUG 18766 / IAM 14443 / JCM 21226 / LMG 7866 / NBRC 102419 / NCTC 12128 / CDC 0568-73).